The chain runs to 86 residues: UPF0457 protein SSP0714 (86 aa).

It belongs to the UPF0457 family.

This Staphylococcus saprophyticus subsp. saprophyticus (strain ATCC 15305 / DSM 20229 / NCIMB 8711 / NCTC 7292 / S-41) protein is UPF0457 protein SSP0714.